Here is a 642-residue protein sequence, read N- to C-terminus: Extracellular metalloproteinase 5 (642 aa).

An N-terminal signal peptide occupies residues 1-19; it reads MHGLLLAAGLLSLPLHVLA. A propeptide spanning residues 20–246 is cleaved from the precursor; it reads HPQPSTTTSL…VHNVVDYVAH (227 aa). A glycan (N-linked (GlcNAc...) asparagine) is linked at N287. H430 contacts Zn(2+). Residue E431 is part of the active site. H434 lines the Zn(2+) pocket. N595 and N624 each carry an N-linked (GlcNAc...) asparagine glycan.

It belongs to the peptidase M36 family. The cofactor is Zn(2+).

Its subcellular location is the secreted. Secreted metalloproteinase that allows assimilation of proteinaceous substrates and probably acts as a virulence factor. The polypeptide is Extracellular metalloproteinase 5 (MEP5) (Arthroderma gypseum (strain ATCC MYA-4604 / CBS 118893) (Microsporum gypseum)).